Reading from the N-terminus, the 174-residue chain is Adenine phosphoribosyltransferase (174 aa).

It belongs to the purine/pyrimidine phosphoribosyltransferase family. In terms of assembly, homodimer.

It is found in the cytoplasm. It carries out the reaction AMP + diphosphate = 5-phospho-alpha-D-ribose 1-diphosphate + adenine. Its pathway is purine metabolism; AMP biosynthesis via salvage pathway; AMP from adenine: step 1/1. Its function is as follows. Catalyzes a salvage reaction resulting in the formation of AMP, that is energically less costly than de novo synthesis. The protein is Adenine phosphoribosyltransferase of Dichelobacter nodosus (strain VCS1703A).